The sequence spans 341 residues: Beta-ketoacyl-[acyl-carrier-protein] synthase III 1 (341 aa).

Active-site residues include Cys113 and His249. The ACP-binding stretch occupies residues 250-254; the sequence is QANIR. Asn279 is a catalytic residue.

This sequence belongs to the thiolase-like superfamily. FabH family. As to quaternary structure, homodimer.

The protein resides in the cytoplasm. It carries out the reaction malonyl-[ACP] + acetyl-CoA + H(+) = 3-oxobutanoyl-[ACP] + CO2 + CoA. It functions in the pathway lipid metabolism; fatty acid biosynthesis. Functionally, catalyzes the condensation reaction of fatty acid synthesis by the addition to an acyl acceptor of two carbons from malonyl-ACP. Catalyzes the first condensation reaction which initiates fatty acid synthesis and may therefore play a role in governing the total rate of fatty acid production. Possesses both acetoacetyl-ACP synthase and acetyl transacylase activities. Its substrate specificity determines the biosynthesis of branched-chain and/or straight-chain of fatty acids. The polypeptide is Beta-ketoacyl-[acyl-carrier-protein] synthase III 1 (Deinococcus radiodurans (strain ATCC 13939 / DSM 20539 / JCM 16871 / CCUG 27074 / LMG 4051 / NBRC 15346 / NCIMB 9279 / VKM B-1422 / R1)).